Here is a 130-residue protein sequence, read N- to C-terminus: Small ribosomal subunit protein uS9 (130 aa).

It belongs to the universal ribosomal protein uS9 family.

This is Small ribosomal subunit protein uS9 from Agathobacter rectalis (strain ATCC 33656 / DSM 3377 / JCM 17463 / KCTC 5835 / VPI 0990) (Eubacterium rectale).